We begin with the raw amino-acid sequence, 129 residues long: Basic blue protein (129 aa).

The signal sequence occupies residues 1–33 (MAKGRGSASWSARAIVTLMAVSVLLLQADYVQA). The 96-residue stretch at 34 to 129 (ATYTVGDSGI…SDMKIAVTAV (96 aa)) folds into the Phytocyanin domain. Positions 72, 112, 117, and 122 each coordinate Cu cation. A disulfide bridge connects residues Cys85 and Cys118.

In terms of tissue distribution, expressed in the inflorescence and in the transmitting tract of the pistil. Detected in roots, stems, cauline leaves, cotyledons, hypocotyls, guard cells, pistils, sepals, stamen filaments and vascular bundles of roots but not of leaves. Not expressed in petals, anthers or pollen.

Its subcellular location is the secreted. It localises to the extracellular space. The protein localises to the extracellular matrix. Its function is as follows. Forms a concentration gradient along the pollen tube growth path, with a lower level in the stigma papilla cell wall and a higher level in the transmitting tract extracellular matix of the style. The protein is Basic blue protein (ARPN) of Arabidopsis thaliana (Mouse-ear cress).